The chain runs to 390 residues: Putative glutamate--cysteine ligase 2 (390 aa).

Belongs to the glutamate--cysteine ligase type 2 family. YbdK subfamily.

The enzyme catalyses L-cysteine + L-glutamate + ATP = gamma-L-glutamyl-L-cysteine + ADP + phosphate + H(+). Its function is as follows. ATP-dependent carboxylate-amine ligase which exhibits weak glutamate--cysteine ligase activity. The polypeptide is Putative glutamate--cysteine ligase 2 (Chloroflexus aurantiacus (strain ATCC 29366 / DSM 635 / J-10-fl)).